Here is a 195-residue protein sequence, read N- to C-terminus: MKIGVLGLQGAVQEHVRAIEACGAEAVVVKKTEQLTGLDGLVLPGGESTTMRRLIDRYGLMEPLKQFAADGKPMFGTCAGLILLAKRIVGYDEPHLGLMDITVERNSFGRQRESFEAELSIKGVGDGFVGVFIRAPHIVEVGDEVEVLATYNDRIVAARQGQFLGCSFHPELTDDHRLMRYFLNMVKEAKTVSSI.

Position 46–48 (46–48 (GES)) interacts with L-glutamine. Residue C78 is the Nucleophile of the active site. Residues R105 and 133 to 134 (IR) each bind L-glutamine. Residues H169 and E171 each act as charge relay system in the active site.

This sequence belongs to the glutaminase PdxT/SNO family. In terms of assembly, in the presence of PdxS, forms a dodecamer of heterodimers. Only shows activity in the heterodimer.

It carries out the reaction aldehydo-D-ribose 5-phosphate + D-glyceraldehyde 3-phosphate + L-glutamine = pyridoxal 5'-phosphate + L-glutamate + phosphate + 3 H2O + H(+). The enzyme catalyses L-glutamine + H2O = L-glutamate + NH4(+). It functions in the pathway cofactor biosynthesis; pyridoxal 5'-phosphate biosynthesis. In terms of biological role, catalyzes the hydrolysis of glutamine to glutamate and ammonia as part of the biosynthesis of pyridoxal 5'-phosphate. The resulting ammonia molecule is channeled to the active site of PdxS. In Geobacillus thermodenitrificans (strain NG80-2), this protein is Pyridoxal 5'-phosphate synthase subunit PdxT.